The sequence spans 128 residues: Ribosome-binding factor A (128 aa).

It belongs to the RbfA family. Monomer. Binds 30S ribosomal subunits, but not 50S ribosomal subunits or 70S ribosomes.

The protein localises to the cytoplasm. One of several proteins that assist in the late maturation steps of the functional core of the 30S ribosomal subunit. Associates with free 30S ribosomal subunits (but not with 30S subunits that are part of 70S ribosomes or polysomes). Required for efficient processing of 16S rRNA. May interact with the 5'-terminal helix region of 16S rRNA. The chain is Ribosome-binding factor A from Microcystis aeruginosa (strain NIES-843 / IAM M-2473).